A 71-amino-acid chain; its full sequence is MPIVKVRENEPFDVALRRFKRSCEKAGVLSEVRRREFFEKPTWERKRKKAAAKKRLLKKLSRENARRIRLY.

Belongs to the bacterial ribosomal protein bS21 family.

The polypeptide is Small ribosomal subunit protein bS21 (Pseudoalteromonas atlantica (strain T6c / ATCC BAA-1087)).